A 732-amino-acid polypeptide reads, in one-letter code: E3 ubiquitin-protein ligase RNF19B (732 aa).

Positions 1 to 109 (MGSEKDSESP…PEEDEAAEGG (109 aa)) are disordered. The required for ubiquitin ligase activity and for protection against staurosporin-induced cell death stretch occupies residues 1-315 (MGSEKDSESP…VCGCEFCWLC (315 aa)). A compositionally biased stretch (pro residues) spans 54–71 (AEPPPPAAPPPPPPPAPA). Residues 72 to 99 (PVEAQAPPVEALPSEPAAEAEAEAVAAG) show a composition bias toward low complexity. A compositionally biased stretch (acidic residues) spans 100 to 109 (PEEDEAAEGG). Positions 112–334 (EEVECPLCLV…LSPSGCTFWG (223 aa)) are TRIAD supradomain. Positions 116, 119, 139, 142, 203, 208, 225, 230, 235, 238, 243, 248, 284, and 287 each coordinate Zn(2+). The RING-type 1 zinc finger occupies 116–165 (CPLCLVRLPPERAPRLLSCPHRSCRDCLRHYLRLEISESRVPISCPECSE). The segment at 183 to 248 (HKYEEFMLRR…KQIWHPNQTC (66 aa)) adopts an IBR-type zinc-finger fold. The RING-type 2; atypical zinc finger occupies 284–315 (CPRCSAYIIKMNDGSCNHMTCAVCGCEFCWLC). Cys-299 is an active-site residue. Positions 304, 307, 312, 315, 323, and 330 each coordinate Zn(2+). The next 2 membrane-spanning stretches (helical) occupy residues 351-371 (LIGAPVGISLIAGIAIPAMVI) and 412-432 (VIAAVSVGIGVPIMLAYVYGV). Disordered stretches follow at residues 598-644 (QLVS…QSCE) and 660-732 (QPES…YEVE). Residues 674-683 (QSDDVPDITS) show a composition bias toward acidic residues.

The protein belongs to the RBR family. RNF19 subfamily. In terms of assembly, interacts with UBE2L3, UBE2L6 and UCKL1. In terms of tissue distribution, expressed specifically in natural killer cells, activated macrophages and cytotoxic T-cells. Present in macrophages (at protein level). Ubiquitously expressed with high expression in testis.

The protein resides in the cytoplasmic granule membrane. It localises to the endoplasmic reticulum membrane. The enzyme catalyses [E2 ubiquitin-conjugating enzyme]-S-ubiquitinyl-L-cysteine + [acceptor protein]-L-lysine = [E2 ubiquitin-conjugating enzyme]-L-cysteine + [acceptor protein]-N(6)-ubiquitinyl-L-lysine.. Its pathway is protein modification; protein ubiquitination. Functionally, E3 ubiquitin-protein ligase which accepts ubiquitin from E2 ubiquitin-conjugating enzymes UBE2L3 and UBE2L6 in the form of a thioester and then directly transfers the ubiquitin to targeted substrates, such as UCKL1. Involved in the cytolytic activity of natural killer cells and cytotoxic T-cells. Protects against staurosporin-induced cell death. The chain is E3 ubiquitin-protein ligase RNF19B (Rnf19b) from Mus musculus (Mouse).